The primary structure comprises 169 residues: Phosphopantetheine adenylyltransferase (169 aa).

Residue Thr-14 participates in substrate binding. Residues 14–15 (TF) and His-22 contribute to the ATP site. Positions 46, 78, and 92 each coordinate substrate. Residues 93–95 (GLR), Glu-103, and 128–134 (HSFISSS) each bind ATP.

Belongs to the bacterial CoaD family. As to quaternary structure, homohexamer. The cofactor is Mg(2+).

The protein localises to the cytoplasm. It carries out the reaction (R)-4'-phosphopantetheine + ATP + H(+) = 3'-dephospho-CoA + diphosphate. Its pathway is cofactor biosynthesis; coenzyme A biosynthesis; CoA from (R)-pantothenate: step 4/5. Reversibly transfers an adenylyl group from ATP to 4'-phosphopantetheine, yielding dephospho-CoA (dPCoA) and pyrophosphate. The protein is Phosphopantetheine adenylyltransferase of Stenotrophomonas maltophilia (strain K279a).